The chain runs to 156 residues: Type II secretion system core protein G (156 aa).

The propeptide at 1-22 is leader sequence; it reads MQQSQRGCGQNSYGQSGYRQRG. Phe-23 carries the N-methylphenylalanine modification. A helical membrane pass occupies residues 23-43; that stretch reads FTLLEIMVVIVILGVLASLVV.

The protein belongs to the GSP G family. As to quaternary structure, type II secretion system is composed of four main components: the outer membrane complex, the inner membrane complex, the cytoplasmic secretion ATPase and the periplasm-spanning pseudopilus. Forms homomultimers. Post-translationally, cleaved by the prepilin peptidase. Methylated by prepilin peptidase at the amino group of the N-terminal phenylalanine once the leader sequence is cleaved.

It is found in the cell inner membrane. In terms of biological role, core component of the type II secretion system required for the energy-dependent secretion of extracellular factors such as proteases and toxins from the periplasm. Pseudopilin (pilin-like) protein that polymerizes to form the pseudopilus. Further polymerization triggers pseudopilus growth. This is Type II secretion system core protein G (outG) from Pectobacterium carotovorum subsp. carotovorum (Erwinia carotovora subsp. carotovora).